Consider the following 276-residue polypeptide: Plant cysteine oxidase 2 (276 aa).

The segment at 1–40 (MGTDTVMSGRVRKDLSKTNPNGNIPENRSNSRKKIQRRSK) is disordered. Residues 17 to 28 (KTNPNGNIPENR) show a composition bias toward polar residues. Residues 30 to 40 (NSRKKIQRRSK) are compositionally biased toward basic residues. Positions 134, 136, and 197 each coordinate Fe cation.

The protein belongs to the cysteine dioxygenase family. It depends on Fe(2+) as a cofactor.

It is found in the nucleus. It localises to the cytoplasm. The enzyme catalyses L-cysteine + O2 = 3-sulfino-L-alanine + H(+). Its function is as follows. Catalyzes the oxidation of N-terminal cysteine residues (N-Cys), thus preparing the protein for N-end rule pathway-mediated proteasomal degradation, upstream of the N-end rule enzymes ATE1, ATE2 and PRT6. Controls the preparation of the group VII ethylene response factor (ERF-VII) proteins for degradation via the 26S proteasome N-end rule pathway. Acts as an oxygen sensor that controls the stability of ERF-VII proteins, which are stabilized in flooding-induced hypoxia, and regulate transcriptional adaptation to these adverse conditions. Not active on Cys located inside or at the C-terminus of a peptide. Acts redundantly with PCO1 to repress the anaerobic response. The chain is Plant cysteine oxidase 2 from Arabidopsis thaliana (Mouse-ear cress).